The sequence spans 168 residues: MTRYEDLPYRTCVGIALINSEGLVFIGRRAGGIEHVDDTHVWQMPQGGVDPGEDAWEAAKRELYEETSVRSVEKLAEIDDWLTYDIPRTVAGRAWKGRYRGQRQKWFALRFTGKDSEIDVEHPGGGHHKAEFITWRWEPLQNLPTLIVPFKRPVYERVAKEFATLAGG.

Residues 8–160 (PYRTCVGIAL…KRPVYERVAK (153 aa)) form the Nudix hydrolase domain. Residues 47–68 (GGVDPGEDAWEAAKRELYEETS) carry the Nudix box motif.

Belongs to the Nudix hydrolase family. RppH subfamily. The cofactor is a divalent metal cation.

In terms of biological role, accelerates the degradation of transcripts by removing pyrophosphate from the 5'-end of triphosphorylated RNA, leading to a more labile monophosphorylated state that can stimulate subsequent ribonuclease cleavage. In Bradyrhizobium sp. (strain ORS 278), this protein is RNA pyrophosphohydrolase.